The following is a 4076-amino-acid chain: E3 ubiquitin-protein ligase TOM1-like (4076 aa).

The segment covering 225–237 (SSAAPAVSAGSTA) has biased composition (low complexity). Disordered regions lie at residues 225–256 (SSAA…KNVA), 288–360 (YPDT…RDGP), 748–819 (IPAE…ILPS), 921–970 (LEAP…NKPA), 1083–1103 (SPVQ…SSGT), 1571–1646 (MALD…ITRE), 1988–2041 (PADA…KRPI), 2067–2110 (NVPA…KLAK), 2275–2295 (EGDK…IGRS), 2356–2551 (SGTA…ELDY), 2581–2634 (GDDL…LLAP), 2782–2817 (IPIP…ESTH), 2858–2955 (EKAR…QAED), 3037–3066 (EQHE…ASIL), 3105–3132 (RQLH…GAGT), 3216–3241 (KQLK…NNNG), and 3353–3444 (EEQA…QLTP). The span at 238–250 (KAKDKEKEKEKAT) shows a compositional bias: basic and acidic residues. A compositionally biased stretch (low complexity) spans 311–320 (TTSSPAAPTP). A compositionally biased stretch (polar residues) spans 322–343 (RRSSTMNVSQSSRTQRVGSSEE). Positions 767–778 (EGNDADDDSEDD) are enriched in acidic residues. Residues 940-950 (VKGKGKEKATD) are compositionally biased toward basic and acidic residues. The span at 959–969 (ASSSSSGNNKP) shows a compositional bias: polar residues. Polar residues predominate over residues 1606-1620 (PGTSRETNVGASTTA). Residues 1621-1632 (PQQLPVLPSQQP) are compositionally biased toward low complexity. Positions 1633–1642 (ATESQSNTPR) are enriched in polar residues. A compositionally biased stretch (basic and acidic residues) spans 2021-2041 (VTDKDMHDAPKNPAQDLKRPI). The segment covering 2086–2096 (NEATPSPSGDE) has biased composition (polar residues). Residues 2099-2110 (SESKEKEKKLAK) are compositionally biased toward basic and acidic residues. 2 stretches are compositionally biased toward acidic residues: residues 2378 to 2387 (DLTDDREETP) and 2405 to 2450 (EFSD…DLGE). Residues 2460–2469 (QPGVVEVLMG) are compositionally biased toward low complexity. Acidic residues-rich tracts occupy residues 2470–2516 (ENDD…DLED) and 2523–2551 (EEGN…ELDY). Positions 2587 to 2597 (EPIRDFDGHYI) are enriched in basic and acidic residues. The span at 2598-2622 (DDDEDGEEDDDEDEGEDDMDDDMYF) shows a compositional bias: acidic residues. Basic and acidic residues-rich tracts occupy residues 2788–2803 (HSRE…DTYQ) and 2858–2912 (EKAR…ERAE). A coiled-coil region spans residues 2851–2929 (AIQAEKEEKA…QAAADQEANA (79 aa)). Residues 2913-2927 (AAAQAAAQAAADQEA) are compositionally biased toward low complexity. A compositionally biased stretch (basic and acidic residues) spans 3037-3047 (EQHEQRRRERQ). Residues 3108–3117 (HAQQGGQAAS) are compositionally biased toward polar residues. Residues 3341 to 3375 (PLQAIERRRKEAEEQAKKKKEAEEKAATEREAANA) adopt a coiled-coil conformation. Basic and acidic residues predominate over residues 3353 to 3372 (EEQAKKKKEAEEKAATEREA). Residues 3373 to 3414 (ANAPEEQASTSTEQTPAQQEATQQPSESTPAAASGQQPAQQD) show a composition bias toward low complexity. Residues 3415–3439 (QENKELEAPKEKADEKDVQSDEKKI) show a composition bias toward basic and acidic residues. The HECT domain occupies 3740–4076 (KADELKFGKL…TAGSDYFGFA (337 aa)). Cys-4043 serves as the catalytic Glycyl thioester intermediate.

Belongs to the UPL family. TOM1/PTR1 subfamily.

The protein resides in the nucleus. The catalysed reaction is S-ubiquitinyl-[E2 ubiquitin-conjugating enzyme]-L-cysteine + [acceptor protein]-L-lysine = [E2 ubiquitin-conjugating enzyme]-L-cysteine + N(6)-ubiquitinyl-[acceptor protein]-L-lysine.. It participates in protein modification; protein ubiquitination. Its function is as follows. Probable ubiquitin ligase protein, which may be involved in mRNA export. E3 ubiquitin ligase proteins mediate ubiquitination and subsequent proteasomal degradation of target proteins. Participates in mRNA export from the nucleus by regulating the transport of hnRNP proteins. This is E3 ubiquitin-protein ligase TOM1-like from Neurospora crassa (strain ATCC 24698 / 74-OR23-1A / CBS 708.71 / DSM 1257 / FGSC 987).